A 972-amino-acid chain; its full sequence is Translation initiation factor IF-2 (972 aa).

Positions 49 to 63 are enriched in basic and acidic residues; that stretch reads HLRKSHGATDGDKRK. 2 disordered regions span residues 49–86 and 100–383; these read HLRK…ARTI and DDVA…TFQA. Over residues 105–114 the composition is skewed to low complexity; the sequence is GAEQGQAQVA. Residues 121-177 are compositionally biased toward basic and acidic residues; it reads ELKRREEEARREAELLEKQAQELRERQERLEREEAERRAREEAAEAERRRAEEEAAA. Residues 178 to 209 are compositionally biased toward low complexity; that stretch reads KRAAAAAVEAQQAAAQQAAEAQQETAGAQSAQ. Over residues 210-261 the composition is skewed to basic and acidic residues; it reads DEARAAAERAAQREAAKKAEDAAREAADKTRAEQEEIRKRREAAEAEARAIR. Residues 277–286 show a composition bias toward pro residues; sequence PPKPVEPPKP. The segment covering 298–327 has biased composition (low complexity); sequence KPAGAGAARPAVKKPAGAAPATTQAPAGAG. Positions 356-369 are enriched in gly residues; it reads SSGGVDRGWRGGPK. A tr-type G domain is found at 472-641; the sequence is PRPPVVTVMG…LLQAEVLELK (170 aa). The tract at residues 481–488 is G1; it reads GHVDHGKT. Position 481–488 (481–488) interacts with GTP; the sequence is GHVDHGKT. Residues 506–510 form a G2 region; that stretch reads GITQH. Residues 527–530 form a G3 region; it reads DTPG. Residues 527-531 and 581-584 contribute to the GTP site; these read DTPGH and NKID. The G4 stretch occupies residues 581–584; sequence NKID. The interval 617-619 is G5; that stretch reads SAK.

Belongs to the TRAFAC class translation factor GTPase superfamily. Classic translation factor GTPase family. IF-2 subfamily.

The protein localises to the cytoplasm. One of the essential components for the initiation of protein synthesis. Protects formylmethionyl-tRNA from spontaneous hydrolysis and promotes its binding to the 30S ribosomal subunits. Also involved in the hydrolysis of GTP during the formation of the 70S ribosomal complex. The protein is Translation initiation factor IF-2 of Burkholderia ambifaria (strain MC40-6).